Here is a 198-residue protein sequence, read N- to C-terminus: uncharacterized protein (198 aa).

It is found in the plastid. Its subcellular location is the chloroplast. This is an uncharacterized protein from Antithamnion sp. (Red alga).